Here is a 200-residue protein sequence, read N- to C-terminus: Proteasome subunit beta 2 (200 aa).

Position 1 (Met-1) is a propeptide, removed in mature form; by autocatalysis. Thr-2 acts as the Nucleophile in catalysis.

This sequence belongs to the peptidase T1B family. In terms of assembly, the 20S proteasome core is composed of 14 alpha and 14 beta subunits that assemble into four stacked heptameric rings, resulting in a barrel-shaped structure. The two inner rings, each composed of seven catalytic beta subunits, are sandwiched by two outer rings, each composed of seven alpha subunits. The catalytic chamber with the active sites is on the inside of the barrel. Has a gated structure, the ends of the cylinder being occluded by the N-termini of the alpha-subunits. Is capped at one or both ends by the proteasome regulatory ATPase, PAN.

The protein localises to the cytoplasm. It carries out the reaction Cleavage of peptide bonds with very broad specificity.. Its activity is regulated as follows. The formation of the proteasomal ATPase PAN-20S proteasome complex, via the docking of the C-termini of PAN into the intersubunit pockets in the alpha-rings, triggers opening of the gate for substrate entry. Interconversion between the open-gate and close-gate conformations leads to a dynamic regulation of the 20S proteasome proteolysis activity. Functionally, component of the proteasome core, a large protease complex with broad specificity involved in protein degradation. In Pyrobaculum islandicum (strain DSM 4184 / JCM 9189 / GEO3), this protein is Proteasome subunit beta 2.